The primary structure comprises 27 residues: Conotoxin flf14a (27 aa).

Disulfide bonds link Cys6–Cys26 and Cys10–Cys22.

Expressed by the venom duct.

It is found in the secreted. This Conus anabathrum floridanus (Florida cone) protein is Conotoxin flf14a.